We begin with the raw amino-acid sequence, 207 residues long: ATP-dependent Clp protease proteolytic subunit 1 (207 aa).

S103 functions as the Nucleophile in the catalytic mechanism. H128 is an active-site residue.

Belongs to the peptidase S14 family. In terms of assembly, fourteen ClpP subunits assemble into 2 heptameric rings which stack back to back to give a disk-like structure with a central cavity, resembling the structure of eukaryotic proteasomes.

It localises to the cytoplasm. The catalysed reaction is Hydrolysis of proteins to small peptides in the presence of ATP and magnesium. alpha-casein is the usual test substrate. In the absence of ATP, only oligopeptides shorter than five residues are hydrolyzed (such as succinyl-Leu-Tyr-|-NHMec, and Leu-Tyr-Leu-|-Tyr-Trp, in which cleavage of the -Tyr-|-Leu- and -Tyr-|-Trp bonds also occurs).. Functionally, cleaves peptides in various proteins in a process that requires ATP hydrolysis. Has a chymotrypsin-like activity. Plays a major role in the degradation of misfolded proteins. The protein is ATP-dependent Clp protease proteolytic subunit 1 of Synechococcus sp. (strain CC9605).